A 255-amino-acid polypeptide reads, in one-letter code: Adenylate dimethylallyltransferase (255 aa).

Belongs to the isopentenyl transferase family.

It carries out the reaction dimethylallyl diphosphate + AMP = N(6)-(dimethylallyl)adenosine 5'-phosphate + diphosphate. In terms of biological role, transfers dimethylallyl groups to AMP as part of the biosynthesis of cytokinin phytohormones. This Rhodococcoides fascians (Rhodococcus fascians) protein is Adenylate dimethylallyltransferase (fas4).